The sequence spans 474 residues: MFAVYLVFSFKKPEASKADLDFFMLTFKYILKGSFFLMLVLALFCALFTFDLMFSAKNLLYPNEYIWDSGDFFFYKNGALKFSLNLYGLILVFLCLLTGFVAISTVDNLYSEDKLKFYLIFFQFFLAVLGFIKCSDLIAFFFFYEVLMLGSVLVVFFGSYSKKSIHAVIYFVAWTQLGSLFVLLACLYIYSLTNSTNFFVIKTFVFSKTQAMTIYSLLFVGFGIKFPIWPLHYWLTKTHVEASTGFSIYLSGFLVKTALFGFYRLTNLIQVELDTTFFLAVLVAGVIDSSLNMWSQTDLKKLVAYCTIQEMNLIAIFFLKGDSSLIAYGFLFTIMHALMSTLMFFLVECIYSRYKSRSTLVVNGVFFSFNNLALAIIFMVLFFSGILGTLKFVCEFFVFNLTLHVSWPIGVIFVVVVSAIGLIGFSKNWFNAIFCAPSKDVGPDALDLSKKELYIIFLCFAGLIFLTFLPFLMI.

Transmembrane regions (helical) follow at residues 34–54 (SFFLMLVLALFCALFTFDLMF), 86–106 (LYGLILVFLCLLTGFVAISTV), 115–135 (LKFYLIFFQFFLAVLGFIKCS), 137–157 (LIAFFFFYEVLMLGSVLVVFF), 167–187 (AVIYFVAWTQLGSLFVLLACL), 211–231 (AMTIYSLLFVGFGIKFPIWPL), 242–262 (ASTGFSIYLSGFLVKTALFGF), 276–295 (TFFLAVLVAGVIDSSLNMWS), 302–322 (LVAYCTIQEMNLIAIFFLKGD), 325–345 (LIAYGFLFTIMHALMSTLMFF), 373–393 (ALAIIFMVLFFSGILGTLKFV), 405–425 (VSWPIGVIFVVVVSAIGLIGF), and 454–474 (YIIFLCFAGLIFLTFLPFLMI).

The protein belongs to the complex I subunit 4 family.

The protein resides in the mitochondrion membrane. The enzyme catalyses a ubiquinone + NADH + 5 H(+)(in) = a ubiquinol + NAD(+) + 4 H(+)(out). Functionally, core subunit of the mitochondrial membrane respiratory chain NADH dehydrogenase (Complex I) that is believed to belong to the minimal assembly required for catalysis. Complex I functions in the transfer of electrons from NADH to the respiratory chain. The immediate electron acceptor for the enzyme is believed to be ubiquinone. The polypeptide is NADH-ubiquinone oxidoreductase chain 4 (ND4) (Paramecium tetraurelia).